The primary structure comprises 643 residues: Very long-chain fatty acid transport protein (643 aa).

Topologically, residues 1-15 (MACMHQAQLYNDLEE) are cytoplasmic. The helical transmembrane segment at 16–36 (LLTGPSVPIVAGAAGAAALTA) threads the bilayer. The Extracellular segment spans residues 37–138 (YINAKYHIAH…AIDGGNSAEH (102 aa)). The helical transmembrane segment at 139 to 159 (LMLWLALDAIGAATSFLNWNL) threads the bilayer. The Cytoplasmic segment spans residues 160-249 (TGAGLIHCIK…TGLPKGVFIS (90 aa)). 235–246 (YTSGTTGLPKGV) contacts ATP. Residues 250-318 (TGRELRTDWS…FWPEVVASEA (69 aa)) lie within the membrane without spanning it. The Cytoplasmic portion of the chain corresponds to 319-643 (NIIQYVGELG…QGIVDKRIRL (325 aa)). The FACS motif lies at 477–525 (DLWFKSGDMLRQDAEGRVYFVDRLGDTFRWKSENVSTNEVADVMGTFPQ).

This sequence belongs to the ATP-dependent AMP-binding enzyme family.

The protein localises to the lipid droplet. Its subcellular location is the cell membrane. The protein resides in the peroxisome membrane. It localises to the peroxisome. The enzyme catalyses a very long-chain fatty acid + ATP + CoA = a very long-chain fatty acyl-CoA + AMP + diphosphate. Acyl-CoA synthetase required for both the import of long chain fatty acids (LCFAs) (C14-C18) and the activation very long chain fatty acids (VLCFAs) (C20-C26) by esterification of the fatty acids into metabolically active CoA-thioesters for subsequent degradation or incorporation into phospholipids. The transport and fatty acyl-CoA synthetase activities are genetically separable and are thus independent activities. Esterifies VLCFAs in the peroxisome matrix. The VLCFAs are actively transported into peroxisomes by a PXA1-PXA2 heterodimeric transporter in the peroxisomal membrane. The polypeptide is Very long-chain fatty acid transport protein (FAT1) (Cochliobolus heterostrophus (Southern corn leaf blight fungus)).